A 183-amino-acid polypeptide reads, in one-letter code: Ras-related protein Rap-2a (183 aa).

10-17 (GSGGVGKS) contributes to the GTP binding site. The Effector region signature appears at 32–40 (YDPTIEDFY). A (Microbial infection) O-linked (Glc) threonine; by C.difficile toxin TcdA, and by P.sordellii toxin TcsL glycan is attached at Thr-35. Residues 57–61 (DTAGT) and 116–119 (NKVD) contribute to the GTP site. Residues Cys-176 and Cys-177 are each lipidated (S-palmitoyl cysteine). The residue at position 180 (Cys-180) is a Cysteine methyl ester. The S-farnesyl cysteine moiety is linked to residue Cys-180. Residues 181 to 183 (NIQ) constitute a propeptide, removed in mature form.

This sequence belongs to the small GTPase superfamily. Ras family. In terms of assembly, interacts (GTP-bound form) with RUNDC3A. Interacts with RGS14; the interaction is GTP-dependent. Interacts with PLCE1. Interacts with ARHGAP29, SGSM1, SGSM2 and SGSM3. Interacts (GTP-bound form preferentially) with TNIK (via the CNH domain); the interaction is direct and recruits RAP2A to the E3 ubiquitin ligase NEDD4. Interacts with MINK1. Interacts (GTP-bound form preferentially) with MAP4K4. Interacts with cytoskeletal actin. In terms of processing, ubiquitinated; undergoes 'Lys-63' monoubiquitination and diubiquitination by NEDD4. Multiple lysine residues are probably modified. Ubiquitination requires TNIK, prevents interaction with effectors and inactivates RAP2A. Ubiquitination by the ECS(RAB40B) complex leads to RAP2A localization to lamellipodia plasma membrane, activation, and regulation of sorting at early endosomes for recycling to the lamellipodia plasma membrane. Post-translationally, palmitoylated. Palmitoylation is required for association with recycling endosome membranes and activation of TNIK. (Microbial infection) Glucosylated at Thr-35 by C.difficile toxin TcdA in the colonic epithelium, and by P.sordellii toxin TcsL in the vascular endothelium.

The protein resides in the midbody. Its subcellular location is the cell projection. The protein localises to the lamellipodium membrane. It localises to the golgi apparatus. It is found in the recycling endosome membrane. The protein resides in the lysosome. The catalysed reaction is GTP + H2O = GDP + phosphate + H(+). Its activity is regulated as follows. Activated by the guanine nucleotide-exchange factors RAPGEF3 and RAPGEF4 in a cAMP-dependent manner. Nucleotide exchange is also specifically stimulated by RAPGEF5, RASGEF1A and RASGEF1B. Small GTP-binding protein which cycles between a GDP-bound inactive and a GTP-bound active form. In its active form interacts with and regulates several effectors including MAP4K4, MINK1 and TNIK. Part of a signaling complex composed of NEDD4, RAP2A and TNIK which regulates neuronal dendrite extension and arborization during development. More generally, it is part of several signaling cascades and regulates cytoskeletal rearrangements, cell migration, cell adhesion and cell spreading. This Homo sapiens (Human) protein is Ras-related protein Rap-2a.